Here is a 307-residue protein sequence, read N- to C-terminus: Low-salt glycan biosynthesis hexosyltransferase Agl10 (307 aa).

Belongs to the glycosyltransferase 2 family.

It participates in protein modification; protein glycosylation. It functions in the pathway cell surface structure biogenesis; S-layer biogenesis. Functionally, hexosyltransferase involved in N-glycan biosynthetic pathway that takes place under low-salt conditions (1.75 M instead of 3.4 M). Participates in the formation of the tetrasaccharide present at 'Asn-532' of S-layer glycoprotein Csg, consisting of a sulfated hexose, 2 hexoses and rhamnose. Involved in the addition of final rhamnose (sugar 4) of the tetrasaccharide on the dolichol phosphate carrier. In Haloferax volcanii (strain ATCC 29605 / DSM 3757 / JCM 8879 / NBRC 14742 / NCIMB 2012 / VKM B-1768 / DS2) (Halobacterium volcanii), this protein is Low-salt glycan biosynthesis hexosyltransferase Agl10 (agl10).